We begin with the raw amino-acid sequence, 337 residues long: Glyceraldehyde-3-phosphate dehydrogenase, cytosolic (337 aa).

NAD(+) contacts are provided by residues 13-14 (RI), Asp35, and Arg82. D-glyceraldehyde 3-phosphate is bound by residues 153 to 155 (SCT), Thr184, 213 to 214 (TG), and Arg236. Cys154 functions as the Nucleophile in the catalytic mechanism. Asn318 is an NAD(+) binding site.

It belongs to the glyceraldehyde-3-phosphate dehydrogenase family. In terms of assembly, homotetramer.

The protein localises to the cytoplasm. The catalysed reaction is D-glyceraldehyde 3-phosphate + phosphate + NAD(+) = (2R)-3-phospho-glyceroyl phosphate + NADH + H(+). It participates in carbohydrate degradation; glycolysis; pyruvate from D-glyceraldehyde 3-phosphate: step 1/5. In terms of biological role, key enzyme in glycolysis that catalyzes the first step of the pathway by converting D-glyceraldehyde 3-phosphate (G3P) into 3-phospho-D-glyceroyl phosphate. Essential for the maintenance of cellular ATP levels and carbohydrate metabolism. The polypeptide is Glyceraldehyde-3-phosphate dehydrogenase, cytosolic (GAPC) (Craterostigma plantagineum (Blue gem)).